We begin with the raw amino-acid sequence, 881 residues long: Putative leucine-rich repeat receptor-like protein kinase At2g19210 (881 aa).

Positions 1–25 are cleaved as a signal peptide; sequence MVHYNFLSLIIFACFFAVFVLLVRA. Topologically, residues 26–518 are extracellular; that stretch reads QDQSGFVSID…SDEKTKKNVY (493 aa). 9 N-linked (GlcNAc...) asparagine glycosylation sites follow: asparagine 143, asparagine 234, asparagine 295, asparagine 310, asparagine 404, asparagine 419, asparagine 435, asparagine 446, and asparagine 462. 2 LRR repeats span residues 438-460 and 462-483; these read LLHILDLSNNSLTGKIPDFLGNL and NLTELNLEGNKLSGAIPVKLLE. Residues 519–539 traverse the membrane as a helical segment; that stretch reads IIPLVASVVGVLGLVLAIALF. Residues 540-881 lie on the Cytoplasmic side of the membrane; the sequence is LLYKKRHRRG…FDSGMFPQAR (342 aa). The 275-residue stretch at 576–850 folds into the Protein kinase domain; the sequence is NNFERVLGQG…HVVAELKESV (275 aa). ATP is bound by residues 582 to 590 and lysine 603; that span reads LGQGGFGKV. Tyrosine 648 is modified (phosphotyrosine). Aspartate 699 (proton acceptor) is an active-site residue. A phosphothreonine mark is found at threonine 734 and threonine 739. Position 747 is a phosphotyrosine (tyrosine 747). Residues 851–881 form a disordered region; that stretch reads SRARAGGGSGASSVTDPAMTNFDSGMFPQAR.

It belongs to the protein kinase superfamily. Ser/Thr protein kinase family.

The protein localises to the cell membrane. It catalyses the reaction L-seryl-[protein] + ATP = O-phospho-L-seryl-[protein] + ADP + H(+). The enzyme catalyses L-threonyl-[protein] + ATP = O-phospho-L-threonyl-[protein] + ADP + H(+). The protein is Putative leucine-rich repeat receptor-like protein kinase At2g19210 of Arabidopsis thaliana (Mouse-ear cress).